Consider the following 753-residue polypeptide: 5-methyltetrahydropteroyltriglutamate--homocysteine methyltransferase (753 aa).

Residues 17–20 and Lys-117 each bind 5-methyltetrahydropteroyltri-L-glutamate; that span reads RELK. L-homocysteine-binding positions include 431 to 433 and Glu-484; that span reads IGS. L-methionine is bound by residues 431-433 and Glu-484; that span reads IGS. 5-methyltetrahydropteroyltri-L-glutamate is bound by residues 515–516 and Trp-561; that span reads RC. Asp-599 is a binding site for L-homocysteine. Residue Asp-599 participates in L-methionine binding. Residue Glu-605 participates in 5-methyltetrahydropteroyltri-L-glutamate binding. Zn(2+) contacts are provided by His-641, Cys-643, and Glu-665. The active-site Proton donor is His-694. Cys-726 is a binding site for Zn(2+).

It belongs to the vitamin-B12 independent methionine synthase family. It depends on Zn(2+) as a cofactor.

It carries out the reaction 5-methyltetrahydropteroyltri-L-glutamate + L-homocysteine = tetrahydropteroyltri-L-glutamate + L-methionine. It functions in the pathway amino-acid biosynthesis; L-methionine biosynthesis via de novo pathway; L-methionine from L-homocysteine (MetE route): step 1/1. Catalyzes the transfer of a methyl group from 5-methyltetrahydrofolate to homocysteine resulting in methionine formation. The protein is 5-methyltetrahydropteroyltriglutamate--homocysteine methyltransferase of Escherichia coli O8 (strain IAI1).